The sequence spans 208 residues: dTTP/UTP pyrophosphatase (208 aa).

The Proton acceptor role is filled by Asp79.

It belongs to the Maf family. YhdE subfamily. A divalent metal cation serves as cofactor.

It is found in the cytoplasm. It catalyses the reaction dTTP + H2O = dTMP + diphosphate + H(+). It carries out the reaction UTP + H2O = UMP + diphosphate + H(+). Its function is as follows. Nucleoside triphosphate pyrophosphatase that hydrolyzes dTTP and UTP. May have a dual role in cell division arrest and in preventing the incorporation of modified nucleotides into cellular nucleic acids. This is dTTP/UTP pyrophosphatase from Mesorhizobium japonicum (strain LMG 29417 / CECT 9101 / MAFF 303099) (Mesorhizobium loti (strain MAFF 303099)).